The sequence spans 144 residues: uncharacterized protein (144 aa).

Residues M1–T58 enclose the HTH lysR-type domain. Residues F18 to A38 constitute a DNA-binding region (H-T-H motif).

Belongs to the LysR transcriptional regulatory family.

This is an uncharacterized protein from Azotobacter vinelandii.